The chain runs to 615 residues: Extracellular metalloproteinase 1 (615 aa).

Residues 1–8 (SLPLHVLA) form the signal peptide. Residues 9 to 235 (HPQPSTSTSL…VHNVVDYVAH (227 aa)) constitute a propeptide that is removed on maturation. An N-linked (GlcNAc...) asparagine glycan is attached at Asn-276. A Zn(2+)-binding site is contributed by His-419. The active site involves Glu-420. His-423 contributes to the Zn(2+) binding site. N-linked (GlcNAc...) asparagine glycosylation is found at Asn-464, Asn-583, and Asn-612.

This sequence belongs to the peptidase M36 family. The cofactor is Zn(2+).

Its subcellular location is the secreted. Secreted metalloproteinase probably acting as a virulence factor. The polypeptide is Extracellular metalloproteinase 1 (MEP1) (Trichophyton equinum (Horse ringworm fungus)).